The chain runs to 42 residues: Gastric inhibitory polypeptide (42 aa).

This sequence belongs to the glucagon family.

Its subcellular location is the secreted. Functionally, potent stimulator of insulin secretion and relatively poor inhibitor of gastric acid secretion. In Bos taurus (Bovine), this protein is Gastric inhibitory polypeptide (GIP).